A 596-amino-acid chain; its full sequence is Transketolase-like protein 1 (596 aa).

His46 contributes to the substrate binding site. Thiamine diphosphate is bound by residues Ser49 and 94–96 (GWL). Asp126 contacts Mg(2+). Residues Gly127 and Asn156 each coordinate thiamine diphosphate. 2 residues coordinate Mg(2+): Asn156 and Leu158. Lys218 and His232 together coordinate thiamine diphosphate. Positions 232, 292, and 319 each coordinate substrate. 2 residues coordinate thiamine diphosphate: Glu340 and Phe366. Glu340 functions as the Proton donor in the catalytic mechanism. The substrate site is built by His390 and Asp398. Thiamine diphosphate is bound at residue Gln402. Arg448 serves as a coordination point for substrate.

This sequence belongs to the transketolase family. Homodimer. It depends on Mg(2+) as a cofactor. Ca(2+) is required as a cofactor. Mn(2+) serves as cofactor. The cofactor is Co(2+). Requires thiamine diphosphate as cofactor. In terms of tissue distribution, widely expressed. Expressed in endothelial cells and in peripheral neurons (at protein level). As to expression, not expressed in fetal neocortex. Expressed in fetal neocortex.

Its subcellular location is the cytoplasm. The catalysed reaction is D-sedoheptulose 7-phosphate + D-glyceraldehyde 3-phosphate = aldehydo-D-ribose 5-phosphate + D-xylulose 5-phosphate. Catalyzes the transfer of a two-carbon ketol group from a ketose donor to an aldose acceptor, via a covalent intermediate with the cofactor thiamine pyrophosphate. Functionally, during fetal neocortex development, may be essential to maintain the full number of basal radial glia (bRG). bRG are neural progenitor cells that undergo asymmetric divisions, generating a bRG (self-renewal) and a neuron, in contrast to basal intermediate progenitors (bIPs), which typically divide once to give rise to 2 neurons. bRG generate more cortical neurons over time than bIPs. This chain is Transketolase-like protein 1 (TKTL1), found in Homo sapiens (Human).